The following is a 400-amino-acid chain: Snake venom metalloproteinase H3 (400 aa).

Residues 1–6 (FPYQGS) form the signal peptide. The propeptide occupies 7-176 (SIILESGNVN…KKASQLIVST (170 aa)). The region spanning 180–377 (KYMEIVIVVD…ENPPCILNKP (198 aa)) is the Peptidase M12B domain. Glu183 and Asp267 together coordinate Ca(2+). Intrachain disulfides connect Cys291–Cys372, Cys331–Cys356, and Cys333–Cys339. A Zn(2+)-binding site is contributed by His316. The active site involves Glu317. Residues His320 and His326 each coordinate Zn(2+). 7 residues coordinate Ca(2+): Cys372, Asn375, Val387, Asn390, Leu392, Glu394, and Asp400. A propeptide spanning residues 378 to 400 (LRTDTVSTPVSGNELLEAGKDYD) is cleaved from the precursor.

This sequence belongs to the venom metalloproteinase (M12B) family. P-I subfamily. Monomer. It depends on Zn(2+) as a cofactor. Expressed by the venom gland.

Its subcellular location is the secreted. Its function is as follows. Snake venom metalloproteinase that impairs hemostasis in the envenomed animal. This chain is Snake venom metalloproteinase H3, found in Deinagkistrodon acutus (Hundred-pace snake).